Here is a 318-residue protein sequence, read N- to C-terminus: NADH-ubiquinone oxidoreductase chain 1 (318 aa).

A run of 8 helical transmembrane segments spans residues 3-23, 69-89, 100-120, 135-155, 171-191, 223-243, 253-273, and 293-313; these read LINV…LTLL, LMFT…WIPI, LGVL…LWSG, AVAQ…SIMM, HMWL…STLA, FFLA…ILFF, ELHT…FLWV, and FLPL…TFAG.

This sequence belongs to the complex I subunit 1 family.

It localises to the mitochondrion inner membrane. It carries out the reaction a ubiquinone + NADH + 5 H(+)(in) = a ubiquinol + NAD(+) + 4 H(+)(out). Its function is as follows. Core subunit of the mitochondrial membrane respiratory chain NADH dehydrogenase (Complex I) that is believed to belong to the minimal assembly required for catalysis. Complex I functions in the transfer of electrons from NADH to the respiratory chain. The immediate electron acceptor for the enzyme is believed to be ubiquinone. This is NADH-ubiquinone oxidoreductase chain 1 (MT-ND1) from Dasypus novemcinctus (Nine-banded armadillo).